A 188-amino-acid chain; its full sequence is Elongation factor P-like protein (188 aa).

It belongs to the elongation factor P family.

This is Elongation factor P-like protein from Vibrio campbellii (strain ATCC BAA-1116).